The sequence spans 422 residues: Serine hydroxymethyltransferase 2 (422 aa).

Residues Leu121 and Gly125–Leu127 contribute to the (6S)-5,6,7,8-tetrahydrofolate site. Residue Lys230 is modified to N6-(pyridoxal phosphate)lysine.

The protein belongs to the SHMT family. As to quaternary structure, homodimer. Requires pyridoxal 5'-phosphate as cofactor.

Its subcellular location is the cytoplasm. The enzyme catalyses (6R)-5,10-methylene-5,6,7,8-tetrahydrofolate + glycine + H2O = (6S)-5,6,7,8-tetrahydrofolate + L-serine. Its pathway is one-carbon metabolism; tetrahydrofolate interconversion. It participates in amino-acid biosynthesis; glycine biosynthesis; glycine from L-serine: step 1/1. In terms of biological role, catalyzes the reversible interconversion of serine and glycine with tetrahydrofolate (THF) serving as the one-carbon carrier. This reaction serves as the major source of one-carbon groups required for the biosynthesis of purines, thymidylate, methionine, and other important biomolecules. Also exhibits THF-independent aldolase activity toward beta-hydroxyamino acids, producing glycine and aldehydes, via a retro-aldol mechanism. This Agrobacterium fabrum (strain C58 / ATCC 33970) (Agrobacterium tumefaciens (strain C58)) protein is Serine hydroxymethyltransferase 2.